The sequence spans 270 residues: Glucosamine-6-phosphate deaminase (270 aa).

Asp68 functions as the Proton acceptor; for enolization step in the catalytic mechanism. Catalysis depends on Asp145, which acts as the For ring-opening step. The Proton acceptor; for ring-opening step role is filled by His147. Glu152 serves as the catalytic For ring-opening step.

This sequence belongs to the glucosamine/galactosamine-6-phosphate isomerase family. NagB subfamily.

It catalyses the reaction alpha-D-glucosamine 6-phosphate + H2O = beta-D-fructose 6-phosphate + NH4(+). Its pathway is amino-sugar metabolism; N-acetylneuraminate degradation; D-fructose 6-phosphate from N-acetylneuraminate: step 5/5. Functionally, catalyzes the reversible isomerization-deamination of glucosamine 6-phosphate (GlcN6P) to form fructose 6-phosphate (Fru6P) and ammonium ion. In Bifidobacterium longum (strain NCC 2705), this protein is Glucosamine-6-phosphate deaminase.